A 93-amino-acid polypeptide reads, in one-letter code: Large ribosomal subunit protein uL23 (93 aa).

Belongs to the universal ribosomal protein uL23 family. Part of the 50S ribosomal subunit. Contacts protein L29, and trigger factor when it is bound to the ribosome.

One of the early assembly proteins it binds 23S rRNA. One of the proteins that surrounds the polypeptide exit tunnel on the outside of the ribosome. Forms the main docking site for trigger factor binding to the ribosome. The chain is Large ribosomal subunit protein uL23 from Opitutus terrae (strain DSM 11246 / JCM 15787 / PB90-1).